Here is a 126-residue protein sequence, read N- to C-terminus: Probable V-type proton ATPase subunit G (126 aa).

Positions 23–45 are disordered; sequence NEARKRKLQRTKQAKQEAQAEVE. Basic residues predominate over residues 26–35; sequence RKRKLQRTKQ.

It belongs to the V-ATPase G subunit family. V-ATPase is a heteromultimeric enzyme made up of two complexes: the ATP-hydrolytic V1 complex and the proton translocation V0 complex. The V1 complex consists of three catalytic AB heterodimers that form a heterohexamer, three peripheral stalks each consisting of EG heterodimers, one central rotor including subunits D and F, and the regulatory subunits C and H. The proton translocation complex V0 consists of the proton transport subunit a, a ring of proteolipid subunits c9c'', rotary subunit d, subunits e and f, and the accessory subunits vah-19/Ac45 and vah-20/PRR.

Its function is as follows. Subunit of the V1 complex of vacuolar(H+)-ATPase (V-ATPase), a multisubunit enzyme composed of a peripheral complex (V1) that hydrolyzes ATP and a membrane integral complex (V0) that translocates protons. V-ATPase is responsible for acidifying and maintaining the pH of intracellular compartments and in some cell types, is targeted to the plasma membrane, where it is responsible for acidifying the extracellular environment. In neurons, required for necrotic cell death by promoting intracellular acidification. The chain is Probable V-type proton ATPase subunit G from Caenorhabditis briggsae.